A 382-amino-acid chain; its full sequence is Methylthioribose-1-phosphate isomerase (382 aa).

Asp258 functions as the Proton donor in the catalytic mechanism.

This sequence belongs to the eIF-2B alpha/beta/delta subunits family. MtnA subfamily.

It localises to the cytoplasm. The protein resides in the nucleus. It catalyses the reaction 5-(methylsulfanyl)-alpha-D-ribose 1-phosphate = 5-(methylsulfanyl)-D-ribulose 1-phosphate. Its pathway is amino-acid biosynthesis; L-methionine biosynthesis via salvage pathway; L-methionine from S-methyl-5-thio-alpha-D-ribose 1-phosphate: step 1/6. Its function is as follows. Catalyzes the interconversion of methylthioribose-1-phosphate (MTR-1-P) into methylthioribulose-1-phosphate (MTRu-1-P). The protein is Methylthioribose-1-phosphate isomerase of Laccaria bicolor (strain S238N-H82 / ATCC MYA-4686) (Bicoloured deceiver).